The sequence spans 426 residues: Serine--tRNA ligase (426 aa).

233–235 (TAE) contacts L-serine. 264–266 (RSE) lines the ATP pocket. Position 287 (Glu287) interacts with L-serine. An ATP-binding site is contributed by 351–354 (EISS). Ser387 is an L-serine binding site.

Belongs to the class-II aminoacyl-tRNA synthetase family. Type-1 seryl-tRNA synthetase subfamily. As to quaternary structure, homodimer. The tRNA molecule binds across the dimer.

It localises to the cytoplasm. It carries out the reaction tRNA(Ser) + L-serine + ATP = L-seryl-tRNA(Ser) + AMP + diphosphate + H(+). It catalyses the reaction tRNA(Sec) + L-serine + ATP = L-seryl-tRNA(Sec) + AMP + diphosphate + H(+). It participates in aminoacyl-tRNA biosynthesis; selenocysteinyl-tRNA(Sec) biosynthesis; L-seryl-tRNA(Sec) from L-serine and tRNA(Sec): step 1/1. In terms of biological role, catalyzes the attachment of serine to tRNA(Ser). Is also able to aminoacylate tRNA(Sec) with serine, to form the misacylated tRNA L-seryl-tRNA(Sec), which will be further converted into selenocysteinyl-tRNA(Sec). The protein is Serine--tRNA ligase of Pseudomonas putida (strain ATCC 700007 / DSM 6899 / JCM 31910 / BCRC 17059 / LMG 24140 / F1).